Reading from the N-terminus, the 433-residue chain is Gamma-glutamyl phosphate reductase (433 aa).

This sequence belongs to the gamma-glutamyl phosphate reductase family.

Its subcellular location is the cytoplasm. It catalyses the reaction L-glutamate 5-semialdehyde + phosphate + NADP(+) = L-glutamyl 5-phosphate + NADPH + H(+). Its pathway is amino-acid biosynthesis; L-proline biosynthesis; L-glutamate 5-semialdehyde from L-glutamate: step 2/2. In terms of biological role, catalyzes the NADPH-dependent reduction of L-glutamate 5-phosphate into L-glutamate 5-semialdehyde and phosphate. The product spontaneously undergoes cyclization to form 1-pyrroline-5-carboxylate. The sequence is that of Gamma-glutamyl phosphate reductase from Psychrobacter cryohalolentis (strain ATCC BAA-1226 / DSM 17306 / VKM B-2378 / K5).